The chain runs to 354 residues: Dihydroorotate dehydrogenase (quinone) (354 aa).

Residues 67-71 and Thr-91 each bind FMN; that span reads AGFDK. Residue Lys-71 participates in substrate binding. Residue 116–120 coordinates substrate; it reads NRMGF. FMN contacts are provided by Asn-144 and Asn-177. Asn-177 is a binding site for substrate. Residue Ser-180 is the Nucleophile of the active site. Asn-182 provides a ligand contact to substrate. Residues Lys-213 and Thr-241 each coordinate FMN. 242–243 is a substrate binding site; that stretch reads NT. FMN contacts are provided by residues Gly-265, Gly-294, and 315 to 316; that span reads YT.

It belongs to the dihydroorotate dehydrogenase family. Type 2 subfamily. In terms of assembly, monomer. The cofactor is FMN.

It localises to the cell membrane. The catalysed reaction is (S)-dihydroorotate + a quinone = orotate + a quinol. It participates in pyrimidine metabolism; UMP biosynthesis via de novo pathway; orotate from (S)-dihydroorotate (quinone route): step 1/1. Functionally, catalyzes the conversion of dihydroorotate to orotate with quinone as electron acceptor. The polypeptide is Dihydroorotate dehydrogenase (quinone) (Mycolicibacterium smegmatis (strain ATCC 700084 / mc(2)155) (Mycobacterium smegmatis)).